Consider the following 81-residue polypeptide: Conotoxin Cl9.6 (81 aa).

A signal peptide spans 1 to 20; it reads MSTLGMTLLILLLLLPLATP. Positions 21 to 40 are excised as a propeptide; that stretch reads DDVGQPPKRDTLRNLLKIGT. Intrachain disulfides connect C46-C69, C54-C76, and C60-C78.

Expressed by the venom duct.

It localises to the secreted. The polypeptide is Conotoxin Cl9.6 (Californiconus californicus (California cone)).